The following is a 589-amino-acid chain: V-type ATP synthase alpha chain (589 aa).

ATP is bound at residue 239-246 (GPFGAGKT).

The protein belongs to the ATPase alpha/beta chains family.

It catalyses the reaction ATP + H2O + 4 H(+)(in) = ADP + phosphate + 5 H(+)(out). In terms of biological role, produces ATP from ADP in the presence of a proton gradient across the membrane. The V-type alpha chain is a catalytic subunit. This Treponema denticola (strain ATCC 35405 / DSM 14222 / CIP 103919 / JCM 8153 / KCTC 15104) protein is V-type ATP synthase alpha chain.